The following is a 452-amino-acid chain: MGYSTISNDNDIKVCVIMVGLPARGKSFISQKIIRYLSWLSIKAKCFNVGNYRRDVSGNVPMDAEFFNFENTDNFKLRELAAQNAIKDIVNFFTKEDGSVAVFDATNSTRKRRKWLKDICEKNNIQPMFLESWSNDHELIINNAKDIGSTSPDYENSEPHVAEADFLERIRQYERFYEPLDPQKDKDMTFIKLVNIIEEVVINKIRTYLESRIVFYVMNIRPKPKYIWLSRHGESIYNVEKKIGGDSSLSERGFQYAKKLEQLVKESAGEINLTVWTSTLKRTQQTANYLPYKKLQWKALDELDAGVCDGMTYEEIEKEYPEDFKARDNDKYEYRYRGGESYRDVVIRLEPVIMELERQENVLIITHQAVLRCIYAYFMNVPQEESPWMSIPLHTLIKLEPRAYGTKVTKIKANIPAVSTYKEKGTSQVGELSQSSTKLHQLLNDSPLEDKF.

Positions 1–223 are 6-phosphofructo-2-kinase; sequence MGYSTISNDN…VFYVMNIRPK (223 aa). 20–28 provides a ligand contact to ATP; sequence GLPARGKSF. Arginine 53 and arginine 78 together coordinate beta-D-fructose 6-phosphate. Aspartate 104 is an active-site residue. Beta-D-fructose 6-phosphate-binding residues include threonine 106 and arginine 112. 143 to 148 provides a ligand contact to ATP; the sequence is NAKDIG. Beta-D-fructose 6-phosphate contacts are provided by arginine 169 and tyrosine 173. The segment at 224-452 is fructose-2,6-bisphosphatase; sequence PKYIWLSRHG…LNDSPLEDKF (229 aa). Arginine 231 provides a ligand contact to beta-D-fructose 2,6-bisphosphate. Histidine 232 serves as the catalytic Tele-phosphohistidine intermediate. The beta-D-fructose 2,6-bisphosphate site is built by asparagine 238 and glycine 244. Glutamate 302 acts as the Proton donor/acceptor in catalysis. Residues tyrosine 313, arginine 327, lysine 331, tyrosine 342, glutamine 368, and arginine 372 each contribute to the beta-D-fructose 2,6-bisphosphate site. 324–327 lines the ATP pocket; the sequence is FKAR. ATP-binding positions include 368–372 and tyrosine 404; that span reads QAVLR. Serine 435 and serine 446 each carry phosphoserine.

In the C-terminal section; belongs to the phosphoglycerate mutase family.

The catalysed reaction is beta-D-fructose 2,6-bisphosphate + H2O = beta-D-fructose 6-phosphate + phosphate. Its activity is regulated as follows. Inhibited by fructose 6-P, activated by glycerol 3-P. In terms of biological role, monofunctional, high-specificity fructose-2,6-bisphosphatase, which releases phosphate from the 2-position of fructose 2,6-bisphosphate. Has no detectable 6-phosphofructo-2-kinase activity. The chain is Fructose-2,6-bisphosphatase from Saccharomyces cerevisiae (strain ATCC 204508 / S288c) (Baker's yeast).